The chain runs to 798 residues: Integrin beta-1 (798 aa).

Residues 1-20 form the signal peptide; that stretch reads MNLQLIFWIGLISSICCVFG. Residues 21-728 lie on the Extracellular side of the membrane; the sequence is QADENRCLKA…ETPECPTGPD (708 aa). One can recognise a PSI domain in the interval 26-76; the sequence is RCLKANAKSCGECIQAGPNCGWCVNSTFLQEGMPTSARCDDLEALKKKGCH. 28 disulfide bridges follow: cysteine 27–cysteine 45, cysteine 35–cysteine 464, cysteine 38–cysteine 64, cysteine 48–cysteine 75, cysteine 207–cysteine 213, cysteine 261–cysteine 301, cysteine 401–cysteine 415, cysteine 435–cysteine 462, cysteine 466–cysteine 486, cysteine 477–cysteine 489, cysteine 491–cysteine 500, cysteine 502–cysteine 533, cysteine 516–cysteine 531, cysteine 525–cysteine 536, cysteine 538–cysteine 553, cysteine 555–cysteine 576, cysteine 560–cysteine 574, cysteine 568–cysteine 579, cysteine 581–cysteine 590, cysteine 592–cysteine 615, cysteine 599–cysteine 613, cysteine 607–cysteine 618, cysteine 620–cysteine 630, cysteine 633–cysteine 636, cysteine 640–cysteine 691, cysteine 646–cysteine 665, cysteine 649–cysteine 661, and cysteine 699–cysteine 723. A glycan (N-linked (GlcNAc...) asparagine) is linked at asparagine 50. The segment covering 75-91 has biased composition (basic and acidic residues); the sequence is CHPDDIENPRGSKDVKK. Positions 75–107 are disordered; that stretch reads CHPDDIENPRGSKDVKKNKNVTNRSKGTAEKLQ. 2 N-linked (GlcNAc...) asparagine glycosylation sites follow: asparagine 94 and asparagine 97. In terms of domain architecture, VWFA spans 140-378; it reads DYPIDLYYLM…QLIIDAYNSL (239 aa). Mg(2+) contacts are provided by serine 152 and serine 154. Ca(2+)-binding residues include serine 154, aspartate 157, aspartate 158, and glutamate 189. Residues 207–213 are CX3CL1-binding; that stretch reads CTSEQNC. Asparagine 212 carries an N-linked (GlcNAc...) asparagine glycan. 4 residues coordinate Ca(2+): asparagine 244, aspartate 246, proline 248, and glutamate 249. Mg(2+) is bound at residue glutamate 249. Asparagine 269 carries N-linked (GlcNAc...) asparagine glycosylation. The CX3CL1-binding stretch occupies residues 295-314; the sequence is LPNDGQCHLENDVYTMSHYY. Position 362 (alanine 362) interacts with Ca(2+). Asparagine 363, asparagine 406, and asparagine 417 each carry an N-linked (GlcNAc...) asparagine glycan. Residues 383-465 form an interaction with TMEM182 region; sequence ILENSKLPEG…IILQFICECE (83 aa). 4 I-EGF domains span residues 466 to 501, 502 to 554, 555 to 591, and 592 to 631; these read CQNE…RHCE, CSTD…KFCE, CDNF…SACD, and CSLD…PTCE. An N-linked (GlcNAc...) asparagine glycan is attached at asparagine 481. Asparagine 520 carries N-linked (GlcNAc...) asparagine glycosylation. The N-linked (GlcNAc...) asparagine glycan is linked to asparagine 584. Asparagine 669 carries N-linked (GlcNAc...) asparagine glycosylation. Residues 729-751 traverse the membrane as a helical segment; the sequence is IIPIVAGVVAGIVLIGLALLLIW. Topologically, residues 752 to 798 are cytoplasmic; it reads KLLMIIHDTREFAKFEKEKMNAKWDTGENPIYKSAVTTVVNPKYEGK. A signal for sorting from recycling endosomes; interaction with ACAP1 region spans residues 762 to 767; that stretch reads EFAKFE. Threonine 777 carries the phosphothreonine modification. Tyrosine 783 carries the phosphotyrosine modification. Phosphoserine is present on serine 785. The interaction with ITGB1BP1 stretch occupies residues 785 to 792; that stretch reads SAVTTVVN. Position 789 is a phosphothreonine (threonine 789). The residue at position 794 (lysine 794) is an N6-acetyllysine; alternate. Lysine 794 participates in a covalent cross-link: Glycyl lysine isopeptide (Lys-Gly) (interchain with G-Cter in SUMO1); alternate.

This sequence belongs to the integrin beta chain family. Interacts with seprase FAP (seprase); the interaction occurs at the cell surface of invadopodia membrane in a collagen-dependent manner. Heterodimer of an alpha and a beta subunit. Beta-1 associates with either alpha-1, alpha-2, alpha-3, alpha-4, alpha-5, alpha-6, alpha-7, alpha-8, alpha-9, alpha-10, alpha-11 or alpha-V. ITGA6:ITGB1 is found in a complex with CD9; interaction takes place in oocytes and is involved in sperm-egg fusion. Binds LGALS3BP and NMRK2, when associated with alpha-7, but not with alpha-5. Interacts with FLNA, FLNB, FLNC and RANBP9. Interacts with KRT1 in the presence of RACK1 and SRC. Interacts with JAML; integrin alpha-4/beta-1 may regulate leukocyte to endothelial cells adhesion by controlling JAML homodimerization. Interacts with RAB21. Interacts (via the cytoplasmic region) with RAB25 (via the hypervariable C-terminal region). Interacts with MYO10. Interacts with ITGB1BP1 (via C-terminal region); the interaction is a prerequisite for focal adhesion disassembly. Interacts with TLN1; the interaction is prevented by competitive binding of ITGB1BP1. Interacts with ACAP1; required for ITGB1 recycling. Interacts with ASAP3. Interacts with FERMT2; the interaction is inhibited in presence of ITGB1BP1. Interacts with DAB2. Interacts with FGR and HCK. Interacts with alpha-7A and alpha-7B in adult skeletal muscle. Interacts with alpha-7B in cardiomyocytes of adult heart. Interacts with EMP2; the interaction may be direct or indirect and ITGB1 has a heterodimer form. ITGA5:ITGB1 interacts with CCN3. ITGA4:ITGB1 is found in a ternary complex with CX3CR1 and CX3CL1. ITGA5:ITGB1 interacts with FBN1. ITGA5:ITGB1 acts as a receptor for fibronectin FN1 and mediates R-G-D-dependent cell adhesion to FN1. ITGA5:ITGB1 interacts with IL1B. Interacts with MDK. ITGA4:ITGB1 interacts with MDK; this interaction mediates MDK-induced osteoblast cells migration through PXN phosphorylation. ITGA6:ITGB1 interacts with MDK; this interaction mediates MDK-induced neurite-outgrowth. ITGA5:ITGB1 interacts with ACE2. Interacts with TMEM182 and LAMB1. Interacts with tensin TNS3; TNS3 also interacts with PEAK1, thus acting as an adapter molecule to bridge the association of PEAK1 with ITGB1. Interacts with tensin TNS4; the interaction displaces tensin TNS3 from the ITGB1 cytoplasmic tail and promotes ITGB1 stability. Integrin ITGA9:ITGB1 interacts with SPP1/OPN (via N-terminus). Integrin ITGA9:ITGB1 interacts with TNC/TNFN3 (via the 3rd Fibronectin type-III domain). Integrins ITGA4:ITGB1 and ITGA9:ITGB1 interact with SVEP1 (via Sushi domain 21); thereby inhibit Ca(2+) intracellular signaling and as a result repress vasocontraction. ITGA4:ITGB1 and ITGA5:ITGB1 interacts with SELP. Interacts with CD248. ITGA5:ITGB1 interacts with IGFBP1. ITGA4:ITGB1 interacts with BCAM. Interacts with ADGRG6.

Its subcellular location is the cell membrane. The protein resides in the cell projection. It localises to the invadopodium membrane. It is found in the ruffle membrane. The protein localises to the recycling endosome. Its subcellular location is the melanosome. The protein resides in the lamellipodium. It localises to the ruffle. It is found in the cell junction. The protein localises to the focal adhesion. In terms of biological role, integrins alpha-1/beta-1, alpha-2/beta-1, alpha-10/beta-1 and alpha-11/beta-1 are receptors for collagen. Integrins alpha-1/beta-1 and alpha-2/beta-2 recognize the proline-hydroxylated sequence G-F-P-G-E-R in collagen. Integrins alpha-2/beta-1, alpha-3/beta-1, alpha-4/beta-1, alpha-5/beta-1, alpha-8/beta-1, alpha-10/beta-1, alpha-11/beta-1 and alpha-V/beta-1 are receptors for fibronectin. Alpha-4/beta-1 recognizes one or more domains within the alternatively spliced CS-1 and CS-5 regions of fibronectin. Integrin alpha-5/beta-1 is a receptor for fibrinogen. Integrin alpha-1/beta-1, alpha-2/beta-1, alpha-6/beta-1 and alpha-7/beta-1 are receptors for lamimin. Integrin alpha-6/beta-1 (ITGA6:ITGB1) is present in oocytes and is involved in sperm-egg fusion. Integrin alpha-4/beta-1 is a receptor for VCAM1 and recognizes the sequence Q-I-D-S in VCAM1. Integrin alpha-9/beta-1 is a receptor for VCAM1, cytotactin and osteopontin. It recognizes the sequence A-E-I-D-G-I-E-L in cytotactin. Integrin alpha-3/beta-1 is a receptor for epiligrin, thrombospondin and CSPG4. Integrin alpha-3/beta-1 provides a docking site for FAP (seprase) at invadopodia plasma membranes in a collagen-dependent manner and hence may participate in the adhesion, formation of invadopodia and matrix degradation processes, promoting cell invasion. Alpha-3/beta-1 may mediate with LGALS3 the stimulation by CSPG4 of endothelial cells migration. Integrin alpha-V/beta-1 is a receptor for vitronectin. Beta-1 integrins recognize the sequence R-G-D in a wide array of ligands. When associated with alpha-7/beta-1 integrin, regulates cell adhesion and laminin matrix deposition. Involved in promoting endothelial cell motility and angiogenesis. Involved in osteoblast compaction through the fibronectin fibrillogenesis cell-mediated matrix assembly process and the formation of mineralized bone nodules. May be involved in up-regulation of the activity of kinases such as PKC via binding to KRT1. Together with KRT1 and RACK1, serves as a platform for SRC activation or inactivation. Plays a mechanistic adhesive role during telophase, required for the successful completion of cytokinesis. ITGA4:ITGB1 binds to fractalkine (CX3CL1) and may act as its coreceptor in CX3CR1-dependent fractalkine signaling. ITGA4:ITGB1 and ITGA5:ITGB1 bind to PLA2G2A via a site (site 2) which is distinct from the classical ligand-binding site (site 1) and this induces integrin conformational changes and enhanced ligand binding to site 1. ITGA5:ITGB1 acts as a receptor for fibrillin-1 (FBN1) and mediates R-G-D-dependent cell adhesion to FBN1. ITGA5:ITGB1 is a receptor for IL1B and binding is essential for IL1B signaling. ITGA5:ITGB3 is a receptor for soluble CD40LG and is required for CD40/CD40LG signaling. Plays an important role in myoblast differentiation and fusion during skeletal myogenesis. ITGA9:ITGB1 may play a crucial role in SVEP1/polydom-mediated myoblast cell adhesion. Integrins ITGA9:ITGB1 and ITGA4:ITGB1 repress PRKCA-mediated L-type voltage-gated channel Ca(2+) influx and ROCK-mediated calcium sensitivity in vascular smooth muscle cells via their interaction with SVEP1, thereby inhibit vasocontraction. This chain is Integrin beta-1 (ITGB1), found in Felis catus (Cat).